Consider the following 639-residue polypeptide: tRNA (uracil(54)-C(5))-methyltransferase (639 aa).

Positions 78 to 113 are disordered; sequence VPPTMKHTVDNKRLSSPLTDSGNRRTKKPKLRKYKA. A phosphoserine mark is found at Ser-92 and Ser-93. Over residues 101–113 the composition is skewed to basic residues; sequence RRTKKPKLRKYKA. One can recognise a TRAM domain in the interval 163–228; the sequence is LQYHREVKNV…PYYVESDLLD (66 aa). Residues Gln-461, Tyr-496, Glu-517, and Asp-564 each contribute to the S-adenosyl-L-methionine site. Catalysis depends on Cys-591, which acts as the Nucleophile. Glu-631 (proton acceptor) is an active-site residue.

The protein belongs to the class I-like SAM-binding methyltransferase superfamily. RNA M5U methyltransferase family.

The catalysed reaction is uridine(54) in tRNA + S-adenosyl-L-methionine = 5-methyluridine(54) in tRNA + S-adenosyl-L-homocysteine + H(+). Its function is as follows. Catalyzes the formation of 5-methyl-uridine at position 54 (m5U54) in all tRNA. May also have a role in tRNA stabilization or maturation. The chain is tRNA (uracil(54)-C(5))-methyltransferase (TRM2) from Saccharomyces cerevisiae (strain ATCC 204508 / S288c) (Baker's yeast).